The following is a 278-amino-acid chain: Ribosomal RNA small subunit methyltransferase A (278 aa).

Residues Asn-27, Leu-29, Gly-54, Glu-75, Asp-101, and Asn-122 each coordinate S-adenosyl-L-methionine.

Belongs to the class I-like SAM-binding methyltransferase superfamily. rRNA adenine N(6)-methyltransferase family. RsmA subfamily.

The protein localises to the cytoplasm. It carries out the reaction adenosine(1518)/adenosine(1519) in 16S rRNA + 4 S-adenosyl-L-methionine = N(6)-dimethyladenosine(1518)/N(6)-dimethyladenosine(1519) in 16S rRNA + 4 S-adenosyl-L-homocysteine + 4 H(+). Functionally, specifically dimethylates two adjacent adenosines (A1518 and A1519) in the loop of a conserved hairpin near the 3'-end of 16S rRNA in the 30S particle. May play a critical role in biogenesis of 30S subunits. This chain is Ribosomal RNA small subunit methyltransferase A, found in Brucella anthropi (strain ATCC 49188 / DSM 6882 / CCUG 24695 / JCM 21032 / LMG 3331 / NBRC 15819 / NCTC 12168 / Alc 37) (Ochrobactrum anthropi).